The primary structure comprises 282 residues: Formamidopyrimidine-DNA glycosylase (282 aa).

The active-site Schiff-base intermediate with DNA is Pro2. Residue Glu3 is the Proton donor of the active site. Lys60 functions as the Proton donor; for beta-elimination activity in the catalytic mechanism. The DNA site is built by His99, Arg118, and Lys163. Residues 248–282 (WVYRRSGKNCKKCGEKILREKICGRSTHWCPNCQK) form an FPG-type zinc finger. Catalysis depends on Arg272, which acts as the Proton donor; for delta-elimination activity.

Belongs to the FPG family. As to quaternary structure, monomer. The cofactor is Zn(2+).

The catalysed reaction is Hydrolysis of DNA containing ring-opened 7-methylguanine residues, releasing 2,6-diamino-4-hydroxy-5-(N-methyl)formamidopyrimidine.. It carries out the reaction 2'-deoxyribonucleotide-(2'-deoxyribose 5'-phosphate)-2'-deoxyribonucleotide-DNA = a 3'-end 2'-deoxyribonucleotide-(2,3-dehydro-2,3-deoxyribose 5'-phosphate)-DNA + a 5'-end 5'-phospho-2'-deoxyribonucleoside-DNA + H(+). Involved in base excision repair of DNA damaged by oxidation or by mutagenic agents. Acts as a DNA glycosylase that recognizes and removes damaged bases. Has a preference for oxidized purines, such as 7,8-dihydro-8-oxoguanine (8-oxoG). Has AP (apurinic/apyrimidinic) lyase activity and introduces nicks in the DNA strand. Cleaves the DNA backbone by beta-delta elimination to generate a single-strand break at the site of the removed base with both 3'- and 5'-phosphates. This Prochlorococcus marinus (strain NATL2A) protein is Formamidopyrimidine-DNA glycosylase.